We begin with the raw amino-acid sequence, 474 residues long: tRNA-2-methylthio-N(6)-dimethylallyladenosine synthase (474 aa).

The region spanning 3 to 120 (KKLHIKTWGC…LPEMINSVRG (118 aa)) is the MTTase N-terminal domain. [4Fe-4S] cluster-binding residues include C12, C49, C83, C157, C161, and C164. One can recognise a Radical SAM core domain in the interval 143–375 (RADGPTAFVS…QDRINQQTTA (233 aa)). The 64-residue stretch at 378–441 (RRKLGTVQRI…ANSLRGMLLR (64 aa)) folds into the TRAM domain.

This sequence belongs to the methylthiotransferase family. MiaB subfamily. As to quaternary structure, monomer. Requires [4Fe-4S] cluster as cofactor.

It is found in the cytoplasm. The enzyme catalyses N(6)-dimethylallyladenosine(37) in tRNA + (sulfur carrier)-SH + AH2 + 2 S-adenosyl-L-methionine = 2-methylsulfanyl-N(6)-dimethylallyladenosine(37) in tRNA + (sulfur carrier)-H + 5'-deoxyadenosine + L-methionine + A + S-adenosyl-L-homocysteine + 2 H(+). In terms of biological role, catalyzes the methylthiolation of N6-(dimethylallyl)adenosine (i(6)A), leading to the formation of 2-methylthio-N6-(dimethylallyl)adenosine (ms(2)i(6)A) at position 37 in tRNAs that read codons beginning with uridine. The protein is tRNA-2-methylthio-N(6)-dimethylallyladenosine synthase of Erwinia tasmaniensis (strain DSM 17950 / CFBP 7177 / CIP 109463 / NCPPB 4357 / Et1/99).